The primary structure comprises 1358 residues: Phosphoribosylformylglycinamidine synthase (1358 aa).

Thr-2 bears the N-acetylthreonine mark. Residues 339-363 form a disordered region; the sequence is AVSPFPGAATGSGGEIRDEGATGRG. ATP-binding positions include 345–356, 424–426, and Ala-719; these read GAATGSGGEIRD and NGY. Mg(2+) is bound by residues Asp-720, Glu-762, Asn-766, and Asp-930. An ATP-binding site is contributed by Ser-932. In terms of domain architecture, Glutamine amidotransferase type-1 spans 1093–1358; that stretch reads VAILREQGVN…LFRSARRWVG (266 aa). The active-site Nucleophile is the Cys-1187. Catalysis depends on residues His-1319 and Glu-1321.

In the N-terminal section; belongs to the FGAMS family.

The protein localises to the cytoplasm. It catalyses the reaction N(2)-formyl-N(1)-(5-phospho-beta-D-ribosyl)glycinamide + L-glutamine + ATP + H2O = 2-formamido-N(1)-(5-O-phospho-beta-D-ribosyl)acetamidine + L-glutamate + ADP + phosphate + H(+). The protein operates within purine metabolism; IMP biosynthesis via de novo pathway; 5-amino-1-(5-phospho-D-ribosyl)imidazole from N(2)-formyl-N(1)-(5-phospho-D-ribosyl)glycinamide: step 1/2. Its function is as follows. Phosphoribosylformylglycinamidine synthase involved in the purines biosynthetic pathway. Catalyzes the ATP-dependent conversion of formylglycinamide ribonucleotide (FGAR) and glutamine to yield formylglycinamidine ribonucleotide (FGAM) and glutamate. The chain is Phosphoribosylformylglycinamidine synthase (ADE6) from Saccharomyces cerevisiae (strain ATCC 204508 / S288c) (Baker's yeast).